A 505-amino-acid polypeptide reads, in one-letter code: Cobyric acid synthase (505 aa).

A GATase cobBQ-type domain is found at 251–444; sequence DIDVAVIKLP…IHGIFDNSEF (194 aa). The active-site Nucleophile is the Cys332. His436 is an active-site residue.

It belongs to the CobB/CobQ family. CobQ subfamily.

The protein operates within cofactor biosynthesis; adenosylcobalamin biosynthesis. Functionally, catalyzes amidations at positions B, D, E, and G on adenosylcobyrinic A,C-diamide. NH(2) groups are provided by glutamine, and one molecule of ATP is hydrogenolyzed for each amidation. The sequence is that of Cobyric acid synthase from Clostridium novyi (strain NT).